A 343-amino-acid chain; its full sequence is MDKAKALESALAQIERQFGKGSIMKLGANSPVMEIEATSTGSLGLDIALGIGGLPKGRIIEIYGPESSGKTTLTLHVVAEEQKKGGVCAFVDAEHALDPQYAKKLGVNLDELLISQPDTGEQALEIVDTLVRSGAVNLIVVDSVAALTPKSEIEGDMGDMQMGSQARLMSQAMRKLTASIGRSNCMVIFINQIRMKIGVMFGNPETTTGGNALKFYASVRLDIRRTGAIKDRDNVIGNTTKVKVVKNKVAPPFREVEFDIMYGEGISKTGELVDLGVKAGVVEKSGSWYSYGDERIGQGRENAKAFLRANPTVAGDIEDRIRASHGLDFSTGEDGKGDDLVDM.

Residue 64–71 (GPESSGKT) participates in ATP binding.

This sequence belongs to the RecA family.

The protein resides in the cytoplasm. In terms of biological role, can catalyze the hydrolysis of ATP in the presence of single-stranded DNA, the ATP-dependent uptake of single-stranded DNA by duplex DNA, and the ATP-dependent hybridization of homologous single-stranded DNAs. It interacts with LexA causing its activation and leading to its autocatalytic cleavage. The polypeptide is Protein RecA (Cereibacter sphaeroides (strain ATCC 17023 / DSM 158 / JCM 6121 / CCUG 31486 / LMG 2827 / NBRC 12203 / NCIMB 8253 / ATH 2.4.1.) (Rhodobacter sphaeroides)).